A 462-amino-acid chain; its full sequence is MENKKENFSEWYNEIVTISDLSDKRYPIKGMNVWRPYGWKIMKLIDNIIRNAVDKHSFDEVNFPVLISRGMLEVEFEHIRGFENEIYWVTKGGKEKLEEELALRPTSESAMYPMFSLWVRSHADLPLKIYQIVSVYRYETKHTRSFIRIREIHFFEAHTAHESYEDAEKQMDEYRIIWTEIADALCLPFLYDQRPEWDKFPGAMYTIAFDTVMPSGRSLQIGTIHQYGTNFSKNYDIKYLKEDGTFEYVHQTTFGMSERLLAAIIGIHGDDKGLILPPAIAPIQVVIVPIPGEGVERYAKDIETTLNGIGIRCHVDNRDNYTPGYKYNDWEMRGVPLRIEVGERELKEKTVTLAARNIRGKKTVQREKLVYEVPDMLDLVKEKITEDAKKTFNSLVVSASSLDDFKKEGLIKAFWCGSKECSDKIENETEKSALGFNLNNDETGKCIVCGKAGKLAIFSRSY.

The protein belongs to the class-II aminoacyl-tRNA synthetase family. ProS type 3 subfamily. In terms of assembly, homodimer.

It localises to the cytoplasm. It carries out the reaction tRNA(Pro) + L-proline + ATP = L-prolyl-tRNA(Pro) + AMP + diphosphate. Its function is as follows. Catalyzes the attachment of proline to tRNA(Pro) in a two-step reaction: proline is first activated by ATP to form Pro-AMP and then transferred to the acceptor end of tRNA(Pro). The protein is Proline--tRNA ligase of Thermoplasma volcanium (strain ATCC 51530 / DSM 4299 / JCM 9571 / NBRC 15438 / GSS1).